A 544-amino-acid chain; its full sequence is Membrane protein insertase YidC (544 aa).

The next 5 helical transmembrane spans lie at 13-33 (LSLF…SNIL), 343-363 (WGLS…PLTF), 409-429 (LGGC…YSLV), 461-481 (LYFV…FTQL), and 506-526 (MPIM…IYWI).

It belongs to the OXA1/ALB3/YidC family. Type 1 subfamily. As to quaternary structure, interacts with the Sec translocase complex via SecD. Specifically interacts with transmembrane segments of nascent integral membrane proteins during membrane integration.

The protein resides in the cell inner membrane. In terms of biological role, required for the insertion and/or proper folding and/or complex formation of integral membrane proteins into the membrane. Involved in integration of membrane proteins that insert both dependently and independently of the Sec translocase complex, as well as at least some lipoproteins. Aids folding of multispanning membrane proteins. The chain is Membrane protein insertase YidC from Borreliella burgdorferi (strain ATCC 35210 / DSM 4680 / CIP 102532 / B31) (Borrelia burgdorferi).